The primary structure comprises 88 residues: Elongation factor 1-beta (88 aa).

The protein belongs to the EF-1-beta/EF-1-delta family.

Its function is as follows. Promotes the exchange of GDP for GTP in EF-1-alpha/GDP, thus allowing the regeneration of EF-1-alpha/GTP that could then be used to form the ternary complex EF-1-alpha/GTP/AAtRNA. This Methanosphaera stadtmanae (strain ATCC 43021 / DSM 3091 / JCM 11832 / MCB-3) protein is Elongation factor 1-beta.